The following is a 234-amino-acid chain: Heme-copper oxidase subunit 2 (234 aa).

A run of 2 helical transmembrane segments spans residues Leu-13–Ile-33 and Leu-72–Leu-92. His-151, Cys-188, Cys-192, and His-196 together coordinate Cu cation.

The protein belongs to the cytochrome c oxidase subunit 2 family.

The protein localises to the cell membrane. The protein is Heme-copper oxidase subunit 2 (aoxA) of Aeropyrum pernix (strain ATCC 700893 / DSM 11879 / JCM 9820 / NBRC 100138 / K1).